Reading from the N-terminus, the 113-residue chain is Large ribosomal subunit protein uL22 (113 aa).

Belongs to the universal ribosomal protein uL22 family. Part of the 50S ribosomal subunit.

Functionally, this protein binds specifically to 23S rRNA; its binding is stimulated by other ribosomal proteins, e.g. L4, L17, and L20. It is important during the early stages of 50S assembly. It makes multiple contacts with different domains of the 23S rRNA in the assembled 50S subunit and ribosome. In terms of biological role, the globular domain of the protein is located near the polypeptide exit tunnel on the outside of the subunit, while an extended beta-hairpin is found that lines the wall of the exit tunnel in the center of the 70S ribosome. In Halothermothrix orenii (strain H 168 / OCM 544 / DSM 9562), this protein is Large ribosomal subunit protein uL22.